A 153-amino-acid chain; its full sequence is ORM1-like protein 2 (153 aa).

Residues 1–21 lie on the Cytoplasmic side of the membrane; it reads MNVGVAHSEVNPNTRVMNSRG. The next 2 helical transmembrane spans lie at 22 to 42 and 43 to 63; these read IWLA…SIPF and FSIP…MYVF. Over 64 to 105 the chain is Cytoplasmic; the sequence is LHTVKGTPFETPDQGKARLLTHWEQMDYGLQFTSSRKFLSIS. The helical transmembrane segment at 106 to 126 threads the bilayer; the sequence is PIVLYLLASFYTKYDAAHFLI. Residues 127-153 are Extracellular-facing; the sequence is NTASLLSVLLPKLPQFHGVRLFGINKY.

Belongs to the ORM family. Ceramide-sensitive subunit of the serine palmitoyltransferase (SPT) complex, which is also composed of SPTLC1, SPTLC2/3 and SPTSSA/B.

The protein resides in the endoplasmic reticulum membrane. Its function is as follows. Plays an essential role in the homeostatic regulation of sphingolipid de novo biosynthesis by modulating the activity of the serine palmitoyltransferase (SPT) in response to ceramide levels. When complexed to SPT, the binding of ceramides to its N-terminus stabilizes a conformation that block SPT substrate entry, hence preventing SPT catalytic activity. Through this mechanism, maintains ceramide levels at sufficient concentrations for the production of complex sphingolipids, but which prevents the accumulation of ceramides to levels that trigger apoptosis. This chain is ORM1-like protein 2 (ORMDL2), found in Bos taurus (Bovine).